The chain runs to 242 residues: MTEITDRYFDDLIARLTGLRGRLAEPMAKAAELITAAALADNRVYVFGTGHSHMMAEELHYRAGGLAITVPILCGAIMLQDGAAASSHFERIKGAVLPILERYGIREGDVLIVVSNSGVNAAPIEAARYAREKGAAVIAVTSVTYSNAIAKGRTQLLSLADVVLDNDAPAGDAVLEMEGSSLKVGPVSTALGVTILNAIFADVAAKLVGKGDAPIYLSANMPGSGEVNRELVARYRDRNPHL.

An SIS domain is found at 30-214; it reads AAELITAAAL…AKLVGKGDAP (185 aa).

This sequence belongs to the UPF0309 family.

The protein is UPF0309 protein Oant_1457 of Brucella anthropi (strain ATCC 49188 / DSM 6882 / CCUG 24695 / JCM 21032 / LMG 3331 / NBRC 15819 / NCTC 12168 / Alc 37) (Ochrobactrum anthropi).